We begin with the raw amino-acid sequence, 343 residues long: Ferrochelatase (343 aa).

Fe cation contacts are provided by His-211 and Glu-292.

It belongs to the ferrochelatase family.

It localises to the cytoplasm. It catalyses the reaction heme b + 2 H(+) = protoporphyrin IX + Fe(2+). The protein operates within porphyrin-containing compound metabolism; protoheme biosynthesis; protoheme from protoporphyrin-IX: step 1/1. Functionally, catalyzes the ferrous insertion into protoporphyrin IX. This Gluconobacter oxydans (strain 621H) (Gluconobacter suboxydans) protein is Ferrochelatase.